Reading from the N-terminus, the 82-residue chain is Beta-defensin 119 (82 aa).

The signal sequence occupies residues 1–19; it reads MKFFLFFVILLAMEPVISG. 3 cysteine pairs are disulfide-bonded: Cys-26–Cys-53, Cys-33–Cys-47, and Cys-37–Cys-54.

It belongs to the beta-defensin family.

The protein localises to the secreted. Its function is as follows. Has antibacterial activity. This chain is Beta-defensin 119 (DEFB119), found in Canis lupus familiaris (Dog).